A 55-amino-acid chain; its full sequence is Spermatid nuclear transition protein 1 (55 aa).

Residues 1 to 42 show a composition bias toward basic residues; it reads MSTSRKLKTHGMRRGKNRAPHKGVKRGGSKRKYRKSSLKSRK. A disordered region spans residues 1–55; that stretch reads MSTSRKLKTHGMRRGKNRAPHKGVKRGGSKRKYRKSSLKSRKRGDDASRNYRSHL. Phosphoserine occurs at positions 36, 37, and 40.

Belongs to the nuclear transition protein 1 family. As to expression, testis.

The protein localises to the nucleus. It localises to the chromosome. Functionally, plays a key role in the replacement of histones to protamine in the elongating spermatids of mammals. In condensing spermatids, loaded onto the nucleosomes, where it promotes the recruitment and processing of protamines, which are responsible for histone eviction. This chain is Spermatid nuclear transition protein 1 (Tnp1), found in Rattus norvegicus (Rat).